Consider the following 368-residue polypeptide: Probable dual-specificity RNA methyltransferase RlmN (368 aa).

Residue glutamate 111 is the Proton acceptor of the active site. Residues 117–355 (YPNRATLCIS…CTVRDTRGQE (239 aa)) enclose the Radical SAM core domain. Cysteines 124 and 360 form a disulfide. [4Fe-4S] cluster-binding residues include cysteine 131, cysteine 135, and cysteine 138. S-adenosyl-L-methionine is bound by residues 181 to 182 (GE), serine 215, 238 to 240 (SLH), and asparagine 317. Residue cysteine 360 is the S-methylcysteine intermediate of the active site.

The protein belongs to the radical SAM superfamily. RlmN family. It depends on [4Fe-4S] cluster as a cofactor.

It localises to the cytoplasm. The catalysed reaction is adenosine(2503) in 23S rRNA + 2 reduced [2Fe-2S]-[ferredoxin] + 2 S-adenosyl-L-methionine = 2-methyladenosine(2503) in 23S rRNA + 5'-deoxyadenosine + L-methionine + 2 oxidized [2Fe-2S]-[ferredoxin] + S-adenosyl-L-homocysteine. It catalyses the reaction adenosine(37) in tRNA + 2 reduced [2Fe-2S]-[ferredoxin] + 2 S-adenosyl-L-methionine = 2-methyladenosine(37) in tRNA + 5'-deoxyadenosine + L-methionine + 2 oxidized [2Fe-2S]-[ferredoxin] + S-adenosyl-L-homocysteine. Its function is as follows. Specifically methylates position 2 of adenine 2503 in 23S rRNA and position 2 of adenine 37 in tRNAs. The protein is Probable dual-specificity RNA methyltransferase RlmN of Corynebacterium diphtheriae (strain ATCC 700971 / NCTC 13129 / Biotype gravis).